Here is a 129-residue protein sequence, read N- to C-terminus: Cytochrome c oxidase subunit 5B, mitochondrial (129 aa).

The transit peptide at 1-31 (MASRLLRGVGALAAQALRAHGPRGVAATRSM) directs the protein to the mitochondrion. Lys-68 and Lys-86 each carry N6-acetyllysine. Positions 91, 93, 113, and 116 each coordinate Zn(2+). Lys-121 carries the N6-acetyllysine modification.

Belongs to the cytochrome c oxidase subunit 5B family. In terms of assembly, component of the cytochrome c oxidase (complex IV, CIV), a multisubunit enzyme composed of 14 subunits. The complex is composed of a catalytic core of 3 subunits MT-CO1, MT-CO2 and MT-CO3, encoded in the mitochondrial DNA, and 11 supernumerary subunits COX4I, COX5A, COX5B, COX6A, COX6B, COX6C, COX7A, COX7B, COX7C, COX8 and NDUFA4, which are encoded in the nuclear genome. The complex exists as a monomer or a dimer and forms supercomplexes (SCs) in the inner mitochondrial membrane with NADH-ubiquinone oxidoreductase (complex I, CI) and ubiquinol-cytochrome c oxidoreductase (cytochrome b-c1 complex, complex III, CIII), resulting in different assemblies (supercomplex SCI(1)III(2)IV(1) and megacomplex MCI(2)III(2)IV(2)).

Its subcellular location is the mitochondrion inner membrane. Its pathway is energy metabolism; oxidative phosphorylation. In terms of biological role, component of the cytochrome c oxidase, the last enzyme in the mitochondrial electron transport chain which drives oxidative phosphorylation. The respiratory chain contains 3 multisubunit complexes succinate dehydrogenase (complex II, CII), ubiquinol-cytochrome c oxidoreductase (cytochrome b-c1 complex, complex III, CIII) and cytochrome c oxidase (complex IV, CIV), that cooperate to transfer electrons derived from NADH and succinate to molecular oxygen, creating an electrochemical gradient over the inner membrane that drives transmembrane transport and the ATP synthase. Cytochrome c oxidase is the component of the respiratory chain that catalyzes the reduction of oxygen to water. Electrons originating from reduced cytochrome c in the intermembrane space (IMS) are transferred via the dinuclear copper A center (CU(A)) of subunit 2 and heme A of subunit 1 to the active site in subunit 1, a binuclear center (BNC) formed by heme A3 and copper B (CU(B)). The BNC reduces molecular oxygen to 2 water molecules using 4 electrons from cytochrome c in the IMS and 4 protons from the mitochondrial matrix. This is Cytochrome c oxidase subunit 5B, mitochondrial (Cox5b) from Rattus norvegicus (Rat).